The primary structure comprises 107 residues: uncharacterized protein (107 aa).

Residues 34–107 (FASKDKKDEK…SDNQKKDMSY (74 aa)) adopt a coiled-coil conformation.

This is an uncharacterized protein from Dictyostelium discoideum (Social amoeba).